Here is a 285-residue protein sequence, read N- to C-terminus: Pseudouridine-5'-phosphate glycosidase (285 aa).

The active-site Proton donor is the glutamate 17. Substrate contacts are provided by lysine 77 and valine 97. Aspartate 126 is a binding site for Mn(2+). A substrate-binding site is contributed by 128–130; sequence SQD. Lysine 147 functions as the Nucleophile in the catalytic mechanism.

The protein belongs to the pseudouridine-5'-phosphate glycosidase family. Homotrimer. It depends on Mn(2+) as a cofactor.

The enzyme catalyses D-ribose 5-phosphate + uracil = psi-UMP + H2O. Functionally, catalyzes the reversible cleavage of pseudouridine 5'-phosphate (PsiMP) to ribose 5-phosphate and uracil. Functions biologically in the cleavage direction, as part of a pseudouridine degradation pathway. In Thermotoga sp. (strain RQ2), this protein is Pseudouridine-5'-phosphate glycosidase.